A 212-amino-acid polypeptide reads, in one-letter code: Peptide methionine sulfoxide reductase MsrA (212 aa).

Cys52 is a catalytic residue.

The protein belongs to the MsrA Met sulfoxide reductase family.

It catalyses the reaction L-methionyl-[protein] + [thioredoxin]-disulfide + H2O = L-methionyl-(S)-S-oxide-[protein] + [thioredoxin]-dithiol. It carries out the reaction [thioredoxin]-disulfide + L-methionine + H2O = L-methionine (S)-S-oxide + [thioredoxin]-dithiol. Functionally, has an important function as a repair enzyme for proteins that have been inactivated by oxidation. Catalyzes the reversible oxidation-reduction of methionine sulfoxide in proteins to methionine. The protein is Peptide methionine sulfoxide reductase MsrA of Escherichia coli O127:H6 (strain E2348/69 / EPEC).